Here is a 473-residue protein sequence, read N- to C-terminus: GTPase Der (473 aa).

EngA-type G domains lie at 3–167 (FTVA…GEDR) and 203–378 (LRVA…KVWN). GTP contacts are provided by residues 9–16 (GRPNVGKS), 56–60 (DTAGL), 119–122 (NKSE), 209–216 (GRPNAGKS), 256–260 (DTAGM), and 321–324 (NKWD). One can recognise a KH-like domain in the interval 379–463 (KRISTARLNR…PIRIHFRSPD (85 aa)).

The protein belongs to the TRAFAC class TrmE-Era-EngA-EngB-Septin-like GTPase superfamily. EngA (Der) GTPase family. As to quaternary structure, associates with the 50S ribosomal subunit.

GTPase that plays an essential role in the late steps of ribosome biogenesis. This chain is GTPase Der, found in Rhizobium johnstonii (strain DSM 114642 / LMG 32736 / 3841) (Rhizobium leguminosarum bv. viciae).